The following is a 205-amino-acid chain: Large ribosomal subunit protein uL18 (205 aa).

Belongs to the universal ribosomal protein uL18 family. Part of the 50S ribosomal subunit. Contacts the 5S and 23S rRNAs.

Functionally, this is one of the proteins that bind and probably mediate the attachment of the 5S RNA into the large ribosomal subunit, where it forms part of the central protuberance. The polypeptide is Large ribosomal subunit protein uL18 (Haloquadratum walsbyi (strain DSM 16790 / HBSQ001)).